Reading from the N-terminus, the 154-residue chain is Endoribonuclease YbeY (154 aa).

Zn(2+) contacts are provided by His113, His117, and His123.

This sequence belongs to the endoribonuclease YbeY family. It depends on Zn(2+) as a cofactor.

It is found in the cytoplasm. In terms of biological role, single strand-specific metallo-endoribonuclease involved in late-stage 70S ribosome quality control and in maturation of the 3' terminus of the 16S rRNA. The polypeptide is Endoribonuclease YbeY (Aeromonas salmonicida (strain A449)).